A 301-amino-acid chain; its full sequence is MSNPELLSEEKAILVETLKNKLQALAEQHVDVLESLAPVVRKRVDVLIEIQSQHDELEAKFLEEKAALEANYQKLYGPLYSKRSEIVSGVLEVEGETEEREEKGVPDFWLKAMKNNEILAEEIHESDEEALKYLKDIKWCRIDDPKGFKFEFFFDTNPFFKNQVLTKTYHMIDEDDEPILEKAIGTEIEWHPGNCLTQEVLTKESSESTKPITKTEEYESFFNFFSPPQVPEDDAKIDENTAEELQNQMERDYDIASTLRDKIIPHVVSWFTGEAVQDEDYGASWVDDEEDDDDEYSDEEA.

A coiled-coil region spans residues 15-69 (VETLKNKLQALAEQHVDVLESLAPVVRKRVDVLIEIQSQHDELEAKFLEEKAALE). A Nuclear export signal motif is present at residues 36 to 51 (LAPVVRKRVDVLIEIQ). The disordered stretch occupies residues 278–301 (DEDYGASWVDDEEDDDDEYSDEEA).

It belongs to the nucleosome assembly protein (NAP) family.

The protein localises to the nucleus. It is found in the cytoplasm. Functionally, may modulate chromatin structure by regulation of nucleosome assembly/disassembly. The sequence is that of Nucleosome assembly protein 1;3 (NAP1;3) from Oryza sativa subsp. japonica (Rice).